The chain runs to 229 residues: Sec-independent protein translocase protein TatB (229 aa).

Residues 1-21 traverse the membrane as a helical segment; that stretch reads MFDIGFSELLLFGVIALIVLG. The tract at residues 90–131 is disordered; sequence EFEHSQSQNLKTSDKAASPANQANNDSAIQNNNEPATFSYAY. Residues 108 to 131 show a composition bias toward polar residues; it reads PANQANNDSAIQNNNEPATFSYAY.

Belongs to the TatB family. As to quaternary structure, the Tat system comprises two distinct complexes: a TatABC complex, containing multiple copies of TatA, TatB and TatC subunits, and a separate TatA complex, containing only TatA subunits. Substrates initially bind to the TatABC complex, which probably triggers association of the separate TatA complex to form the active translocon.

The protein resides in the cell inner membrane. Functionally, part of the twin-arginine translocation (Tat) system that transports large folded proteins containing a characteristic twin-arginine motif in their signal peptide across membranes. Together with TatC, TatB is part of a receptor directly interacting with Tat signal peptides. TatB may form an oligomeric binding site that transiently accommodates folded Tat precursor proteins before their translocation. This is Sec-independent protein translocase protein TatB from Psychrobacter arcticus (strain DSM 17307 / VKM B-2377 / 273-4).